The primary structure comprises 424 residues: UPF0229 protein PC1_1960 (424 aa).

The tract at residues 46–109 (IESGESVSIP…GQGDASKDGE (64 aa)) is disordered. Residues 77 to 90 (PGNDHFVQNDKIER) show a composition bias toward basic and acidic residues. The segment covering 92–101 (QGGGGGGSGQ) has biased composition (gly residues).

This sequence belongs to the UPF0229 family.

This is UPF0229 protein PC1_1960 from Pectobacterium carotovorum subsp. carotovorum (strain PC1).